An 848-amino-acid polypeptide reads, in one-letter code: Adenylate cyclase (848 aa).

The interval 1 to 535 (MYLYIETLKQ…DVSHHFPLRL (535 aa)) is catalytic. The segment at 541–848 (KALYSPCEIR…DTPLLQQYFS (308 aa)) is regulatory. A Phosphohistidine; by CRR modification is found at His-609.

Belongs to the adenylyl cyclase class-1 family.

Its subcellular location is the cytoplasm. It catalyses the reaction ATP = 3',5'-cyclic AMP + diphosphate. The protein is Adenylate cyclase (cyaA) of Escherichia coli O157:H7.